The chain runs to 197 residues: Probable nicotinate-nucleotide adenylyltransferase (197 aa).

It belongs to the NadD family.

It carries out the reaction nicotinate beta-D-ribonucleotide + ATP + H(+) = deamido-NAD(+) + diphosphate. It participates in cofactor biosynthesis; NAD(+) biosynthesis; deamido-NAD(+) from nicotinate D-ribonucleotide: step 1/1. Catalyzes the reversible adenylation of nicotinate mononucleotide (NaMN) to nicotinic acid adenine dinucleotide (NaAD). The chain is Probable nicotinate-nucleotide adenylyltransferase from Bordetella pertussis (strain Tohama I / ATCC BAA-589 / NCTC 13251).